The following is a 428-amino-acid chain: Adenylosuccinate synthetase (428 aa).

GTP-binding positions include 12–18 and 40–42; these read GDEGKGK and GHT. Catalysis depends on Asp13, which acts as the Proton acceptor. Asp13 and Gly40 together coordinate Mg(2+). Residues 13–16, 38–41, Thr128, Arg142, Gln223, Thr238, and Arg302 contribute to the IMP site; these read DEGK and NAGH. His41 serves as the catalytic Proton donor. 298-304 is a binding site for substrate; the sequence is VTTGRPR. GTP-binding positions include Arg304, 330-332, and 413-415; these read KLD and GVG.

The protein belongs to the adenylosuccinate synthetase family. Homodimer. Requires Mg(2+) as cofactor.

The protein localises to the cytoplasm. It catalyses the reaction IMP + L-aspartate + GTP = N(6)-(1,2-dicarboxyethyl)-AMP + GDP + phosphate + 2 H(+). Its pathway is purine metabolism; AMP biosynthesis via de novo pathway; AMP from IMP: step 1/2. Plays an important role in the de novo pathway of purine nucleotide biosynthesis. Catalyzes the first committed step in the biosynthesis of AMP from IMP. This is Adenylosuccinate synthetase from Acidothermus cellulolyticus (strain ATCC 43068 / DSM 8971 / 11B).